Reading from the N-terminus, the 428-residue chain is MSAFVVLGAQWGDEGKGKMTDYLAEEAEVVVRFQGGNNAGHTVEVEDKQYKLHLIPSGILHDEKLNVIGNGVVVDPKALFTEIDYLEGLGVKVTPEKLIVSDRAHLIMPYHITLDKLKEKARGKNDIGTTCKGIGPCYTDKYERSGIRVCDLMHKDSFAEKLRINIEMKNGYIKLLGGEELNFDEIYNEYMAFAERLRPYVKDTSVEIYNAIQADKNVLFEGAQGMLLDIDYGTYPYVTSSNTTSCGVASGAGIGPNMVTNAVGIAKAYTTRVGKGPFPTELENETGDWIREKGHEYGVTTGRSRRCGWLDLVILKTTTRVCGLTSLVVTKIDTLAGLDKIQMCVGYELDGKVIDYFPASLEDLARCKPVYEEFEGWGEEVADARSYEELPENAKTYLRRIEEFTGTKVSIVGVGPKRNQTIRVREEL.

GTP contacts are provided by residues 12–18 (GDEGKGK) and 40–42 (GHT). Asp-13 acts as the Proton acceptor in catalysis. 2 residues coordinate Mg(2+): Asp-13 and Gly-40. Residues 13-16 (DEGK), 38-41 (NAGH), Thr-130, Arg-144, Gln-224, Thr-239, and Arg-303 each bind IMP. Residue His-41 is the Proton donor of the active site. 299–305 (VTTGRSR) lines the substrate pocket. GTP contacts are provided by residues Arg-305, 331–333 (KID), and 413–415 (GVG).

This sequence belongs to the adenylosuccinate synthetase family. Homodimer. The cofactor is Mg(2+).

It is found in the cytoplasm. It catalyses the reaction IMP + L-aspartate + GTP = N(6)-(1,2-dicarboxyethyl)-AMP + GDP + phosphate + 2 H(+). The protein operates within purine metabolism; AMP biosynthesis via de novo pathway; AMP from IMP: step 1/2. Its function is as follows. Plays an important role in the de novo pathway of purine nucleotide biosynthesis. Catalyzes the first committed step in the biosynthesis of AMP from IMP. This Clostridium perfringens (strain 13 / Type A) protein is Adenylosuccinate synthetase.